Consider the following 254-residue polypeptide: DNA repair protein RecO (254 aa).

Belongs to the RecO family.

Its function is as follows. Involved in DNA repair and RecF pathway recombination. In Anaeromyxobacter dehalogenans (strain 2CP-C), this protein is DNA repair protein RecO.